Consider the following 108-residue polypeptide: E3 ubiquitin-protein ligase Midline-1 (108 aa).

The B30.2/SPRY domain occupies 1–100; that stretch reads KSAPKHEWIG…IITGLPIPDH (100 aa).

Belongs to the TRIM/RBCC family. As to quaternary structure, homodimer or heterodimer with MID2. Interacts with IGBP1.

Its subcellular location is the cytoplasm. The protein resides in the cytoskeleton. It carries out the reaction S-ubiquitinyl-[E2 ubiquitin-conjugating enzyme]-L-cysteine + [acceptor protein]-L-lysine = [E2 ubiquitin-conjugating enzyme]-L-cysteine + N(6)-ubiquitinyl-[acceptor protein]-L-lysine.. In terms of biological role, has E3 ubiquitin ligase activity towards IGBP1, promoting its monoubiquitination, which results in deprotection of the catalytic subunit of protein phosphatase PP2A, and its subsequent degradation by polyubiquitination. This chain is E3 ubiquitin-protein ligase Midline-1 (Mid1), found in Mus caroli (Ryukyu mouse).